The chain runs to 164 residues: C-phycoerythrin alpha chain (164 aa).

Positions 82 and 139 each coordinate (2R,3E)-phycoerythrobilin.

The protein belongs to the phycobiliprotein family. In terms of assembly, heterodimer of an alpha and a beta chain. Contains two covalently linked bilin chromophores.

Its subcellular location is the cellular thylakoid membrane. Its function is as follows. Light-harvesting photosynthetic bile pigment-protein from the phycobiliprotein complex. The protein is C-phycoerythrin alpha chain (cpeA) of Microchaete diplosiphon (Fremyella diplosiphon).